Reading from the N-terminus, the 54-residue chain is Defensin-like protein 1 (54 aa).

4 disulfides stabilise this stretch: cysteine 6/cysteine 54, cysteine 17/cysteine 39, cysteine 23/cysteine 48, and cysteine 27/cysteine 50.

This sequence belongs to the DEFL family.

It localises to the secreted. In terms of biological role, possesses antifungal activity insensitive to inorganic cations. Causes germ tubes and hyphae to swell and form multiple hyphal buds. Binds to the plasma membrane of the fungus. Has no inhibitory effect on insect gut alpha-amylase. This is Defensin-like protein 1 from Heuchera sanguinea (Coralbells).